The sequence spans 284 residues: MEMO1 family protein YG5714_2180 (284 aa).

Belongs to the MEMO1 family.

The polypeptide is MEMO1 family protein YG5714_2180 (Saccharolobus islandicus (strain Y.G.57.14 / Yellowstone #1) (Sulfolobus islandicus)).